The chain runs to 145 residues: D-aminoacyl-tRNA deacylase (145 aa).

A Gly-cisPro motif, important for rejection of L-amino acids motif is present at residues 137–138 (GP).

Belongs to the DTD family. As to quaternary structure, homodimer.

The protein resides in the cytoplasm. The catalysed reaction is glycyl-tRNA(Ala) + H2O = tRNA(Ala) + glycine + H(+). It carries out the reaction a D-aminoacyl-tRNA + H2O = a tRNA + a D-alpha-amino acid + H(+). Its function is as follows. An aminoacyl-tRNA editing enzyme that deacylates mischarged D-aminoacyl-tRNAs. Also deacylates mischarged glycyl-tRNA(Ala), protecting cells against glycine mischarging by AlaRS. Acts via tRNA-based rather than protein-based catalysis; rejects L-amino acids rather than detecting D-amino acids in the active site. By recycling D-aminoacyl-tRNA to D-amino acids and free tRNA molecules, this enzyme counteracts the toxicity associated with the formation of D-aminoacyl-tRNA entities in vivo and helps enforce protein L-homochirality. The sequence is that of D-aminoacyl-tRNA deacylase from Serratia proteamaculans (strain 568).